Consider the following 647-residue polypeptide: MGKIRKLDDQLSNLIAAGEVVERPASVVKELVENSIDANSTSIEIHLEEAGLSKIRIIDNGDGIAEEDCIVAFERHATSKIKDENDLFRIRTLGFRGEALPSIASVSELELITSTGDAPGTHLIIKGGDIIKQEKTASRKGTDITVQNLFFNTPARLKYMKTIHTELGNITDIVYRIAMSHPEVSLKLFHNEKKLLHTSGNGDVRQVLASIYSIQVAKKLVPIEAESLDFTIKGYVTLPEVTRASRNYMSTIVNGRYVRNFVLMKAIQQGYHTLLPVGRYPIGFLSIEMDPMLVDVNVHPAKLEVRFSKEQELLKLIEETLQAAFKKIQLIPDAGVTTKKKEKDESVQEQFQFEHAKPKEPSMPDIILPTGMDEKQEEPLAVKQPAQLWQPPKQEWQPPQSLVREEQSWQPSTKPIMEEPIREEKSWDSNEEDFELEELEEEVQEIEEIEMNGNDLPPLYPIGQMHGTYIFAQNDKGLYMIDQHAAQERINYEYFRDKVGRVAQEVQELLVPYRIDLSLTEFLRVEEQLEELKKVGLFLEQFGHQSFIVRSHPTWFPKGQETEIIDEMMEQVVKLKKVDIKKLREEAAIMMSCKASIKANQYLTNDQIFALLEELRTTTNPYTCPHGRPILVHHSTYELEKMFKRVM.

It belongs to the DNA mismatch repair MutL/HexB family.

Functionally, this protein is involved in the repair of mismatches in DNA. It is required for dam-dependent methyl-directed DNA mismatch repair. May act as a 'molecular matchmaker', a protein that promotes the formation of a stable complex between two or more DNA-binding proteins in an ATP-dependent manner without itself being part of a final effector complex. The polypeptide is DNA mismatch repair protein MutL (Bacillus cereus (strain 03BB102)).